Reading from the N-terminus, the 61-residue chain is MAKKSMIAKAQRKPKFQVRAYTRCRICGRPHSVYRDFGLCRVCLRKMGSEGLIPGLRKASW.

Zn(2+) contacts are provided by Cys-24, Cys-27, Cys-40, and Cys-43.

Belongs to the universal ribosomal protein uS14 family. Zinc-binding uS14 subfamily. Part of the 30S ribosomal subunit. Contacts proteins S3 and S10. It depends on Zn(2+) as a cofactor.

Its function is as follows. Binds 16S rRNA, required for the assembly of 30S particles and may also be responsible for determining the conformation of the 16S rRNA at the A site. The sequence is that of Small ribosomal subunit protein uS14 from Helicobacter pylori (strain G27).